Consider the following 162-residue polypeptide: Sec-independent protein translocase protein TatB (162 aa).

The chain crosses the membrane as a helical span at residues 1 to 21 (MFDIGFSELILIFVVGLVVLG). The disordered stretch occupies residues 136–162 (LTAYYPPDDDLVSPSTTKLEQDKQNVN).

Belongs to the TatB family. In terms of assembly, the Tat system comprises two distinct complexes: a TatABC complex, containing multiple copies of TatA, TatB and TatC subunits, and a separate TatA complex, containing only TatA subunits. Substrates initially bind to the TatABC complex, which probably triggers association of the separate TatA complex to form the active translocon.

It is found in the cell inner membrane. Part of the twin-arginine translocation (Tat) system that transports large folded proteins containing a characteristic twin-arginine motif in their signal peptide across membranes. Together with TatC, TatB is part of a receptor directly interacting with Tat signal peptides. TatB may form an oligomeric binding site that transiently accommodates folded Tat precursor proteins before their translocation. This chain is Sec-independent protein translocase protein TatB, found in Haemophilus ducreyi (strain 35000HP / ATCC 700724).